The primary structure comprises 369 residues: F-box protein UCC1 (369 aa).

The region spanning 8–45 (LMDLPLEIHLSLLEYVPNELRAVNKYFYVLHNHSYKEK) is the F-box domain.

In terms of assembly, component of the SCF(UCC1) E3 ubiquitin-protein ligase complex composed of CDC53, SKP1, RBX1 and UCC1. Interacts with CIT2. In terms of processing, monoubiquitinated by UBC4.

It participates in protein modification; protein ubiquitination. In terms of biological role, substrate recognition component of the SKP1-CUL1-F-box protein E3 ubiquitin-protein ligase complex SCF(UCC1) which mediates the ubiquitination and subsequent proteasomal degradation of target proteins. The SCF(UCC1) complex acts as a metabolic switch for the glyoxylate cycle and regulates the level of CIT2 protein to maintain citrate homeostasis. The sequence is that of F-box protein UCC1 (UCC1) from Saccharomyces cerevisiae (strain ATCC 204508 / S288c) (Baker's yeast).